We begin with the raw amino-acid sequence, 384 residues long: Putative exopolyphosphatase (384 aa).

Asp-40, Asp-42, Asp-116, His-138, and Asp-200 together coordinate Mn(2+).

It belongs to the PPase class C family. Mn(2+) serves as cofactor.

The enzyme catalyses [phosphate](n) + H2O = [phosphate](n-1) + phosphate + H(+). In terms of biological role, degradation of inorganic polyphosphates. In Schizosaccharomyces pombe (strain 972 / ATCC 24843) (Fission yeast), this protein is Putative exopolyphosphatase.